A 459-amino-acid chain; its full sequence is Cysteine--tRNA ligase (459 aa).

Cys-31 contacts Zn(2+). Positions 33-43 (PTVYDNPHIGN) match the 'HIGH' region motif. Residues Cys-216, His-241, and Glu-245 each contribute to the Zn(2+) site. A 'KMSKS' region motif is present at residues 274–278 (KMSKS). Lys-277 lines the ATP pocket.

Belongs to the class-I aminoacyl-tRNA synthetase family. In terms of assembly, monomer. It depends on Zn(2+) as a cofactor.

The protein resides in the cytoplasm. It carries out the reaction tRNA(Cys) + L-cysteine + ATP = L-cysteinyl-tRNA(Cys) + AMP + diphosphate. In Rickettsia canadensis (strain McKiel), this protein is Cysteine--tRNA ligase.